A 139-amino-acid chain; its full sequence is Proline-rich protein 13 (139 aa).

Residues 1–139 (MWNPSAGPNP…SSSSSSSDSD (139 aa)) form a disordered region. 2 stretches are compositionally biased toward pro residues: residues 24–62 (ACPP…PQPG) and 70–91 (GPYP…PPAP). Over residues 103-124 (KTRKKMKKAHKKSHKHHKHGKH) the composition is skewed to basic residues. A compositionally biased stretch (low complexity) spans 125–139 (SSSSSSSSSSSSDSD).

It is found in the nucleus. Negatively regulates TSP1 expression at the level of transcription. This down-regulation was shown to reduce taxane-induced apoptosis. The sequence is that of Proline-rich protein 13 (Prr13) from Rattus norvegicus (Rat).